We begin with the raw amino-acid sequence, 216 residues long: Cytidylate kinase (216 aa).

Residue 7 to 15 (GPSGTGKST) participates in ATP binding.

It belongs to the cytidylate kinase family. Type 1 subfamily.

Its subcellular location is the cytoplasm. The enzyme catalyses CMP + ATP = CDP + ADP. It catalyses the reaction dCMP + ATP = dCDP + ADP. The polypeptide is Cytidylate kinase (Chlamydia pneumoniae (Chlamydophila pneumoniae)).